The sequence spans 336 residues: Mitochondrial amidoxime reducing component 2 (336 aa).

A mitochondrion-targeting transit peptide spans 1 to 35 (MGAAGSSALARLGLPALPGPRWLGVAALGLAAVAL). Glycyl lysine isopeptide (Lys-Gly) (interchain with G-Cter in ubiquitin) cross-links involve residues Lys138, Lys144, Lys173, Lys187, Lys287, and Lys294. Residues 188–334 (ARASNEIFPS…LKVGDPVYQM (147 aa)) form the MOSC domain.

In terms of assembly, component of a complex composed of cytochrome b5, NADH-cytochrome b5 reductase (CYB5R3) and MTARC2. Mo-molybdopterin is required as a cofactor. In terms of processing, ubiquitinated by PRKN during mitophagy, leading to its degradation and enhancement of mitophagy. Deubiquitinated by USP30.

The protein resides in the mitochondrion outer membrane. The protein localises to the peroxisome. The catalysed reaction is N(omega)-hydroxy-L-arginine + 2 Fe(II)-[cytochrome b5] + 2 H(+) = L-arginine + 2 Fe(III)-[cytochrome b5] + H2O. Catalyzes the reduction of N-oxygenated molecules, acting as a counterpart of cytochrome P450 and flavin-containing monooxygenases in metabolic cycles. As a component of prodrug-converting system, reduces a multitude of N-hydroxylated prodrugs particularly amidoximes, leading to increased drug bioavailability. May be involved in mitochondrial N(omega)-hydroxy-L-arginine (NOHA) reduction, regulating endogenous nitric oxide levels and biosynthesis. Postulated to cleave the N-OH bond of N-hydroxylated substrates in concert with electron transfer from NADH to cytochrome b5 reductase then to cytochrome b5, the ultimate electron donor that primes the active site for substrate reduction. This chain is Mitochondrial amidoxime reducing component 2 (MTARC2), found in Bos taurus (Bovine).